The chain runs to 145 residues: Ribosome maturation factor RimP (145 aa).

Belongs to the RimP family.

The protein localises to the cytoplasm. Functionally, required for maturation of 30S ribosomal subunits. In Borrelia garinii subsp. bavariensis (strain ATCC BAA-2496 / DSM 23469 / PBi) (Borreliella bavariensis), this protein is Ribosome maturation factor RimP.